We begin with the raw amino-acid sequence, 552 residues long: MERFLRKYNISGDYANATRSISAISPQWTCSHLKRNCLFNGMCVKQNFERAMTAATDAEEPAKAYKLVELAKEAMYDRETVWLQCFKSFSQPYEEDVEGKMKRCRVQLLEDYRKSGMMDEAVKQSALVNSERVRLDDSLSAMPYIYVPIKEGQIVNPTFISRYRQIAYYFYNPDAADDWIDPNLFGIRGQHNQIKREVERQINTCLYTGYKGRVFQVMFLPIQLINFLRMDDFAKHFNRYASMTIQQYLRVGYAEEVRYVQQLFGRVPTGEFPLHQMMLIRRDFPTRDRSIVEARVRRSGDENWQSWLLPMIIVREGLDHPDRWEWLIDYMDRKHTCQLCYLKHSKQIPTCGVIDVRASELTGCSPFKTVKIEEHVGNDSVFKTKLVRDEQIGRIGDHYYTTNCYTGAEALITTAIHIHRWIRGCGIWNDEGWQEGIFMLGRVLLRWELTKAQRSALLRLFCFVCYGYAPRADGTIPDWNNLGSFLDIILKGPELSEDEDERAYATMFEMVRCIITLCYAEKVHFAGFAAPACESGEVINLAARMSQMWMEY.

This Bluetongue virus 1 (isolate South Africa) (BTV 1) protein is Non-structural protein NS1 (Segment-5).